The primary structure comprises 404 residues: CCA-adding enzyme (404 aa).

Glycine 27 and arginine 30 together coordinate ATP. The CTP site is built by glycine 27 and arginine 30. Mg(2+)-binding residues include aspartate 40 and aspartate 42. Residues arginine 111, aspartate 154, arginine 157, arginine 160, and arginine 163 each coordinate ATP. Positions 111, 154, 157, 160, and 163 each coordinate CTP.

It belongs to the tRNA nucleotidyltransferase/poly(A) polymerase family. Bacterial CCA-adding enzyme type 3 subfamily. In terms of assembly, homodimer. The cofactor is Mg(2+).

The catalysed reaction is a tRNA precursor + 2 CTP + ATP = a tRNA with a 3' CCA end + 3 diphosphate. It carries out the reaction a tRNA with a 3' CCA end + 2 CTP + ATP = a tRNA with a 3' CCACCA end + 3 diphosphate. Functionally, catalyzes the addition and repair of the essential 3'-terminal CCA sequence in tRNAs without using a nucleic acid template. Adds these three nucleotides in the order of C, C, and A to the tRNA nucleotide-73, using CTP and ATP as substrates and producing inorganic pyrophosphate. tRNA 3'-terminal CCA addition is required both for tRNA processing and repair. Also involved in tRNA surveillance by mediating tandem CCA addition to generate a CCACCA at the 3' terminus of unstable tRNAs. While stable tRNAs receive only 3'-terminal CCA, unstable tRNAs are marked with CCACCA and rapidly degraded. The structural flexibility of RNA controls the choice between CCA versus CCACCA addition: following the first CCA addition cycle, nucleotide-binding to the active site triggers a clockwise screw motion, producing torque on the RNA. This ejects stable RNAs, whereas unstable RNAs are refolded while bound to the enzyme and subjected to a second CCA catalytic cycle. This is CCA-adding enzyme from Geobacillus stearothermophilus (Bacillus stearothermophilus).